A 174-amino-acid chain; its full sequence is Crossover junction endodeoxyribonuclease RuvC (174 aa).

Residues Asp8, Glu67, and Asp139 contribute to the active site. 3 residues coordinate Mg(2+): Asp8, Glu67, and Asp139.

Belongs to the RuvC family. Homodimer which binds Holliday junction (HJ) DNA. The HJ becomes 2-fold symmetrical on binding to RuvC with unstacked arms; it has a different conformation from HJ DNA in complex with RuvA. In the full resolvosome a probable DNA-RuvA(4)-RuvB(12)-RuvC(2) complex forms which resolves the HJ. Mg(2+) serves as cofactor.

It localises to the cytoplasm. It carries out the reaction Endonucleolytic cleavage at a junction such as a reciprocal single-stranded crossover between two homologous DNA duplexes (Holliday junction).. In terms of biological role, the RuvA-RuvB-RuvC complex processes Holliday junction (HJ) DNA during genetic recombination and DNA repair. Endonuclease that resolves HJ intermediates. Cleaves cruciform DNA by making single-stranded nicks across the HJ at symmetrical positions within the homologous arms, yielding a 5'-phosphate and a 3'-hydroxyl group; requires a central core of homology in the junction. The consensus cleavage sequence is 5'-(A/T)TT(C/G)-3'. Cleavage occurs on the 3'-side of the TT dinucleotide at the point of strand exchange. HJ branch migration catalyzed by RuvA-RuvB allows RuvC to scan DNA until it finds its consensus sequence, where it cleaves and resolves the cruciform DNA. The chain is Crossover junction endodeoxyribonuclease RuvC from Pseudomonas putida (strain ATCC 700007 / DSM 6899 / JCM 31910 / BCRC 17059 / LMG 24140 / F1).